The following is a 420-amino-acid chain: Replication factor C large subunit (420 aa).

Residue 46-53 (GVQGSGKT) participates in ATP binding.

This sequence belongs to the activator 1 small subunits family. RfcL subfamily. As to quaternary structure, heteromultimer composed of small subunits (RfcS) and large subunits (RfcL).

Functionally, part of the RFC clamp loader complex which loads the PCNA sliding clamp onto DNA. The chain is Replication factor C large subunit from Thermoplasma volcanium (strain ATCC 51530 / DSM 4299 / JCM 9571 / NBRC 15438 / GSS1).